A 459-amino-acid chain; its full sequence is Ammonium transporter Rh type B (459 aa).

Over 1 to 10 (MAESTNLRLR) the chain is Cytoplasmic. A helical membrane pass occupies residues 11–31 (LPLICIILEVILIILFGVLVE). Over 32-58 (YNDDTDAKKWNKNNSTDPATNEFYYRY) the chain is Extracellular. Asparagine 45 carries an N-linked (GlcNAc...) asparagine glycan. Residues 59–79 (PSFQDVHVMIFVGFGFLMTFL) traverse the membrane as a helical segment. At 80 to 87 (QRYGFSSM) the chain is on the cytoplasmic side. Residues 88-108 (GFNFLIAAFSLQWATLMQGFF) form a helical membrane-spanning segment. The Extracellular portion of the chain corresponds to 109–121 (HGMHHGKIHVGVT). The chain crosses the membrane as a helical span at residues 122–142 (SMINADFCTGAVLISFGAVLG). At 143–149 (KTSPVQL) the chain is on the cytoplasmic side. Residues 150–170 (LVMAILEVTLFAVNEYILLSI) form a helical membrane-spanning segment. Residues 171–176 (LGANDA) lie on the Extracellular side of the membrane. Residues 177-197 (GGSMTIHTFGAYFGLMVTRIL) traverse the membrane as a helical segment. Residues 198 to 216 (HRPNLDKSKHKNSSVYHSD) lie on the Cytoplasmic side of the membrane. A helical transmembrane segment spans residues 217-237 (LFAMIGTIFLWMFWPSFNSAI). Over 238-248 (TQYGDPQHRTA) the chain is Extracellular. The chain crosses the membrane as a helical span at residues 249 to 269 (ANTYYSLAACTLATFGFSSLV). The Cytoplasmic portion of the chain corresponds to 270-274 (NPEGK). A helical membrane pass occupies residues 275–295 (LDMVHIQNAALAGGVAVGTAG). A topological domain (extracellular) is located at residue glutamate 296. Residues 297 to 317 (MMLTPFGSMIVGFLAGTISVL) form a helical membrane-spanning segment. Residues 318 to 340 (GYKYLTPFMESKLKIQDTCGIHN) are Cytoplasmic-facing. The chain crosses the membrane as a helical span at residues 341–361 (LHGMPGILGAIVGAVTAALAS). At 362–392 (RDVYGNGLDKVFLEAADNSQWSAQTKGGFQA) the chain is on the extracellular side. Residues 393-413 (ISLAVTLGIALIGGLITGFLL) traverse the membrane as a helical segment. Residues 414–459 (KLPIYGTPPDTQCFEDAVYWEVPGEEEDHHELNEVSTQNEVEKLNS) lie on the Cytoplasmic side of the membrane. The interval 440–459 (EDHHELNEVSTQNEVEKLNS) is disordered.

It belongs to the ammonium transporter (TC 2.A.49) family. Rh subfamily.

It localises to the basolateral cell membrane. The protein resides in the cytoplasmic vesicle membrane. Its function is as follows. Functions as an ammonia transporter. May play a role in the elimination of ammonia in the gill. The sequence is that of Ammonium transporter Rh type B (rhbg) from Danio rerio (Zebrafish).